The sequence spans 234 residues: Synaptogyrin-1 (234 aa).

Met-1 is subject to N-acetylmethionine. The Cytoplasmic portion of the chain corresponds to 1–23; that stretch reads MEGGAYGAGKAGGAFDPYALVRQ. Positions 20-173 constitute an MARVEL domain; sequence LVRQPHTILR…QAVLAFQRYQ (154 aa). Residues 24-44 traverse the membrane as a helical segment; the sequence is PHTILRVVSWLFSIVVFGSIV. The Lumenal portion of the chain corresponds to 45–71; it reads NEGYLNSASEGEEFCIYNRNPNACSYG. A helical membrane pass occupies residues 72–92; it reads VAVGVLAFLTCLLYLALDVYF. Residues 93 to 103 lie on the Cytoplasmic side of the membrane; it reads PQISSVKDRKK. Residues 104–124 traverse the membrane as a helical segment; sequence AVLSDIGVSAFWAFLWFVGFC. At 125 to 148 the chain is on the lumenal side; that stretch reads YLANQWQVSKPKDNPLNEGTDAAR. The helical transmembrane segment at 149–169 threads the bilayer; that stretch reads AAIAFSFFSIFTWAGQAVLAF. Residues 170 to 234 are Cytoplasmic-facing; that stretch reads QRYQIGADSA…EPQGYQSQGY (65 aa). A disordered region spans residues 192 to 234; sequence SSMPYAPYVEPSTGPDPAGMGGTYQQPANTFDTEPQGYQSQGY. A compositionally biased stretch (polar residues) spans 214 to 234; sequence TYQQPANTFDTEPQGYQSQGY.

The protein belongs to the synaptogyrin family.

It is found in the cytoplasmic vesicle. The protein localises to the secretory vesicle. It localises to the synaptic vesicle membrane. Its subcellular location is the melanosome. In terms of biological role, may play a role in regulated exocytosis. Modulates the localization of synaptophysin/SYP into synaptic-like microvesicles and may therefore play a role in synaptic-like microvesicle formation and/or maturation. Involved in the regulation of short-term and long-term synaptic plasticity. This Pongo abelii (Sumatran orangutan) protein is Synaptogyrin-1.